The sequence spans 95 residues: Small ribosomal subunit protein bS6 (95 aa).

Belongs to the bacterial ribosomal protein bS6 family.

Its function is as follows. Binds together with bS18 to 16S ribosomal RNA. The chain is Small ribosomal subunit protein bS6 from Thermoanaerobacter pseudethanolicus (strain ATCC 33223 / 39E) (Clostridium thermohydrosulfuricum).